Consider the following 211-residue polypeptide: Protein-L-isoaspartate O-methyltransferase (211 aa).

Residue serine 60 is part of the active site.

This sequence belongs to the methyltransferase superfamily. L-isoaspartyl/D-aspartyl protein methyltransferase family.

It is found in the cytoplasm. It carries out the reaction [protein]-L-isoaspartate + S-adenosyl-L-methionine = [protein]-L-isoaspartate alpha-methyl ester + S-adenosyl-L-homocysteine. In terms of biological role, catalyzes the methyl esterification of L-isoaspartyl residues in peptides and proteins that result from spontaneous decomposition of normal L-aspartyl and L-asparaginyl residues. It plays a role in the repair and/or degradation of damaged proteins. This chain is Protein-L-isoaspartate O-methyltransferase, found in Pseudomonas fluorescens (strain ATCC BAA-477 / NRRL B-23932 / Pf-5).